The sequence spans 127 residues: Single-stranded DNA-binding protein 2 (127 aa).

The SSB domain maps to 4-103 (INKVMLVGRC…ITINTIELLG (100 aa)). The tract at residues 104–127 (SPRKEESTSTSAPNETQAVANANF) is disordered. Over residues 111–127 (TSTSAPNETQAVANANF) the composition is skewed to polar residues.

Homotetramer.

This chain is Single-stranded DNA-binding protein 2 (ssb2), found in Nostoc sp. (strain PCC 7120 / SAG 25.82 / UTEX 2576).